The primary structure comprises 323 residues: tRNA U34 carboxymethyltransferase (323 aa).

Carboxy-S-adenosyl-L-methionine contacts are provided by residues K91, W105, K110, G130, 152–154 (DPT), 181–182 (IE), M196, Y200, and R315.

Belongs to the class I-like SAM-binding methyltransferase superfamily. CmoB family. Homotetramer.

The catalysed reaction is carboxy-S-adenosyl-L-methionine + 5-hydroxyuridine(34) in tRNA = 5-carboxymethoxyuridine(34) in tRNA + S-adenosyl-L-homocysteine + H(+). Catalyzes carboxymethyl transfer from carboxy-S-adenosyl-L-methionine (Cx-SAM) to 5-hydroxyuridine (ho5U) to form 5-carboxymethoxyuridine (cmo5U) at position 34 in tRNAs. This Cronobacter sakazakii (strain ATCC BAA-894) (Enterobacter sakazakii) protein is tRNA U34 carboxymethyltransferase.